We begin with the raw amino-acid sequence, 355 residues long: Guanine nucleotide-binding protein G(o) subunit alpha (355 aa).

Residues 1–17 (MGCASSAEERAAPSAQQ) are compositionally biased toward low complexity. The interval 1–24 (MGCASSAEERAAPSAQQADREKLK) is disordered. Glycine 2 carries the N-myristoyl glycine lipid modification. Cysteine 3 carries the S-palmitoyl cysteine lipid modification. Residues 32 to 355 (KDIKLLLLGA…ANNLRGCGLY (324 aa)) form the G-alpha domain. A G1 motif region spans residues 35–48 (KLLLLGAGESGKST). GTP is bound by residues 40 to 47 (GAGESGKS), 176 to 182 (LRTRVKT), 201 to 205 (DVGRG), 201 to 206 (DVGRGQ), 271 to 274 (NKKD), and alanine 327. 2 residues coordinate Mg(2+): serine 47 and threonine 182. The segment at 174–182 (DILRTRVKT) is G2 motif. The G3 motif stretch occupies residues 197-206 (FKLFDVGRGQ). A G4 motif region spans residues 267–274 (ILFLNKKD). A G5 motif region spans residues 326–330 (TATDT).

Belongs to the G-alpha family. G(i/o/t/z) subfamily. G proteins are composed of 3 units; alpha, beta and gamma. The alpha chain contains the guanine nucleotide binding site.

Guanine nucleotide-binding proteins (G proteins) are involved as modulators or transducers in various transmembrane signaling systems. The G(o) protein function is not clear. The sequence is that of Guanine nucleotide-binding protein G(o) subunit alpha from Manduca sexta (Tobacco hawkmoth).